The chain runs to 130 residues: Small ribosomal subunit protein uS9 (130 aa).

It belongs to the universal ribosomal protein uS9 family.

The polypeptide is Small ribosomal subunit protein uS9 (Xylella fastidiosa (strain 9a5c)).